The following is a 160-amino-acid chain: Large ribosomal subunit protein uL22c (160 aa).

The protein belongs to the universal ribosomal protein uL22 family. Part of the 50S ribosomal subunit.

The protein resides in the plastid. It localises to the chloroplast. Its function is as follows. This protein binds specifically to 23S rRNA. Functionally, the globular domain of the protein is located near the polypeptide exit tunnel on the outside of the subunit, while an extended beta-hairpin is found that lines the wall of the exit tunnel in the center of the 70S ribosome. This Eucalyptus globulus subsp. globulus (Tasmanian blue gum) protein is Large ribosomal subunit protein uL22c (rpl22).